We begin with the raw amino-acid sequence, 130 residues long: Small ribosomal subunit protein uS9 (130 aa).

It belongs to the universal ribosomal protein uS9 family.

This is Small ribosomal subunit protein uS9 from Caldicellulosiruptor bescii (strain ATCC BAA-1888 / DSM 6725 / KCTC 15123 / Z-1320) (Anaerocellum thermophilum).